Consider the following 370-residue polypeptide: Actin-related protein 2/3 complex subunit 1A (370 aa).

6 WD repeats span residues 6–45 (FLLE…WVKA), 50–89 (EHNG…WKPT), 140–179 (PIRS…VDEK), 202–241 (GTGG…QVST), 244–284 (TEFL…TFVS), and 322–365 (LHQN…SSIQ).

It belongs to the WD repeat ARPC1 family. Probable component of the Arp2/3 complex in which it may replace ARPC1B. In addition to its role in the cytoplasmic cytoskeleton, the Arp2/3 complex also promotes actin polymerization in the nucleus, thereby regulating gene transcription and repair of damaged DNA.

Its subcellular location is the cytoplasm. It localises to the cytoskeleton. The protein localises to the nucleus. Its function is as follows. Probably functions as a component of the Arp2/3 complex which is involved in regulation of actin polymerization and together with an activating nucleation-promoting factor (NPF) mediates the formation of branched actin networks. This Homo sapiens (Human) protein is Actin-related protein 2/3 complex subunit 1A (ARPC1A).